The sequence spans 124 residues: Ribonuclease pancreatic (124 aa).

The segment covering 1-13 has biased composition (basic and acidic residues); it reads KESAAAKFERQHM. The segment at 1-24 is disordered; sequence KESAAAKFERQHMDSSTSSASSSN. The substrate site is built by K7 and R10. The active-site Proton acceptor is the H12. Cystine bridges form between C26–C84, C40–C95, C58–C110, and C65–C72. N34 is a glycosylation site (N-linked (GlcNAc...) asparagine; partial). Substrate is bound by residues 41-45, K66, and R85; that span reads KPVNT. H119 serves as the catalytic Proton donor.

Belongs to the pancreatic ribonuclease family. In terms of assembly, monomer. Interacts with and forms tight 1:1 complexes with RNH1. Dimerization of two such complexes may occur. Interaction with RNH1 inhibits this protein. In terms of tissue distribution, pancreas.

It is found in the secreted. It carries out the reaction an [RNA] containing cytidine + H2O = an [RNA]-3'-cytidine-3'-phosphate + a 5'-hydroxy-ribonucleotide-3'-[RNA].. It catalyses the reaction an [RNA] containing uridine + H2O = an [RNA]-3'-uridine-3'-phosphate + a 5'-hydroxy-ribonucleotide-3'-[RNA].. In terms of biological role, endonuclease that catalyzes the cleavage of RNA on the 3' side of pyrimidine nucleotides. Acts on single-stranded and double-stranded RNA. The chain is Ribonuclease pancreatic (RNASE1) from Aepyceros melampus (Impala).